The primary structure comprises 366 residues: Photosynthetic reaction center cytochrome c subunit (366 aa).

The N-terminal stretch at 1–22 (MALAVRISTLTVAVTAAALLAG) is a signal peptide. Cysteine 23 carries N-palmitoyl cysteine lipidation. A lipid anchor (S-diacylglycerol cysteine) is attached at cysteine 23. Positions 94, 107, 110, 111, 129, 143, 151, 154, 155, 238, 249, 252, 253, 309, 312, and 313 each coordinate heme.

As to quaternary structure, component of the photosynthetic reaction center composed of protein subunits L (PufL), M (PufM), H (PuhA) and cytochrome C (PufC). The reaction center interacts with light-harvesting antenna complex LH1. Binds 4 heme groups per subunit.

It localises to the cellular chromatophore membrane. In terms of biological role, the reaction center of purple bacteria contains a tightly bound cytochrome molecule which re-reduces the photo oxidized primary electron donor. This Rubrivivax gelatinosus (strain NBRC 100245 / IL144) protein is Photosynthetic reaction center cytochrome c subunit (pufC).